The sequence spans 226 residues: Ribonuclease 3 (226 aa).

Residues 4–127 (LEEFEKKLGY…VMGAIYLEKG (124 aa)) enclose the RNase III domain. Residue Glu-40 coordinates Mg(2+). Asp-44 is a catalytic residue. Residues Asn-113 and Glu-116 each contribute to the Mg(2+) site. Glu-116 is an active-site residue. The DRBM domain maps to 154-223 (DFKTALQEFT…AKEALKILKA (70 aa)).

It belongs to the ribonuclease III family. As to quaternary structure, homodimer. Requires Mg(2+) as cofactor.

The protein localises to the cytoplasm. It carries out the reaction Endonucleolytic cleavage to 5'-phosphomonoester.. Digests double-stranded RNA. Involved in the processing of primary rRNA transcript to yield the immediate precursors to the large and small rRNAs (23S and 16S). Processes some mRNAs, and tRNAs when they are encoded in the rRNA operon. Processes pre-crRNA and tracrRNA of type II CRISPR loci if present in the organism. The polypeptide is Ribonuclease 3 (Nitratiruptor sp. (strain SB155-2)).